The following is a 195-amino-acid chain: Probable serine/threonine-protein kinase BUD32 homolog (195 aa).

The Protein kinase domain occupies 1–195; that stretch reads MKVYLGGEAE…GRYVERVSMG (195 aa). Lys12 provides a ligand contact to ATP. The Proton acceptor role is filled by Asp107.

It belongs to the protein kinase superfamily. Tyr protein kinase family. BUD32 subfamily.

The protein localises to the cytoplasm. It carries out the reaction L-seryl-[protein] + ATP = O-phospho-L-seryl-[protein] + ADP + H(+). The catalysed reaction is L-threonyl-[protein] + ATP = O-phospho-L-threonyl-[protein] + ADP + H(+). Its function is as follows. Could be involved in the formation of a threonylcarbamoyl group on adenosine at position 37 (t(6)A37) in tRNAs that read codons beginning with adenine. The polypeptide is Probable serine/threonine-protein kinase BUD32 homolog (Archaeoglobus fulgidus (strain ATCC 49558 / DSM 4304 / JCM 9628 / NBRC 100126 / VC-16)).